Here is a 198-residue protein sequence, read N- to C-terminus: DnaJ homolog subfamily C member 12 (198 aa).

N-acetylmethionine is present on Met-1. One can recognise a J domain in the interval 14–79; the sequence is DYYTLLGCDE…ASRARYDHWR (66 aa). The interval 112–167 is disordered; the sequence is MLEESDQTPTDKIENEEQDEQKEIKKEEFGSTTEKMEQKESKSVEKSFSPQNPDSP. Over residues 120–156 the composition is skewed to basic and acidic residues; the sequence is PTDKIENEEQDEQKEIKKEEFGSTTEKMEQKESKSVE. Phosphoserine occurs at positions 160, 166, and 182.

In terms of assembly, interacts with HSPA8. Interacts with TPH1. Interacts with TPH2.

Its subcellular location is the cytoplasm. In terms of biological role, probable co-chaperone that participates in the proper folding of biopterin-dependent aromatic amino acid hydroxylases, which include phenylalanine-4-hydroxylase (PAH), tyrosine 3-monooxygenase (TH) and peripheral and neuronal tryptophan hydroxylases (TPH1 and TPH2). The chain is DnaJ homolog subfamily C member 12 (DNAJC12) from Bos taurus (Bovine).